Reading from the N-terminus, the 1011-residue chain is DNA-directed RNA polymerase subunit beta'' (1011 aa).

4 residues coordinate Zn(2+): cysteine 216, cysteine 282, cysteine 288, and cysteine 291.

The protein belongs to the RNA polymerase beta' chain family. RpoC2 subfamily. In plastids the minimal PEP RNA polymerase catalytic core is composed of four subunits: alpha, beta, beta', and beta''. When a (nuclear-encoded) sigma factor is associated with the core the holoenzyme is formed, which can initiate transcription. The cofactor is Zn(2+).

The protein resides in the plastid. The protein localises to the chloroplast. It catalyses the reaction RNA(n) + a ribonucleoside 5'-triphosphate = RNA(n+1) + diphosphate. DNA-dependent RNA polymerase catalyzes the transcription of DNA into RNA using the four ribonucleoside triphosphates as substrates. In Ostreococcus tauri, this protein is DNA-directed RNA polymerase subunit beta''.